Reading from the N-terminus, the 83-residue chain is Small ribosomal subunit protein uS17 (83 aa).

The protein belongs to the universal ribosomal protein uS17 family. Part of the 30S ribosomal subunit.

Functionally, one of the primary rRNA binding proteins, it binds specifically to the 5'-end of 16S ribosomal RNA. The chain is Small ribosomal subunit protein uS17 from Francisella tularensis subsp. tularensis (strain FSC 198).